Here is a 132-residue protein sequence, read N- to C-terminus: U-scoloptoxin(05)-Er3a (132 aa).

Residues 1–19 (MRSWFVFVALLAVVFLPSS) form the signal peptide.

This sequence belongs to the scoloptoxin-05 family. In terms of processing, contains 5 disulfide bonds. In terms of tissue distribution, expressed by the venom gland.

It is found in the secreted. The chain is U-scoloptoxin(05)-Er3a from Ethmostigmus rubripes (Giant centipede).